The sequence spans 140 residues: ATP synthase epsilon chain (140 aa).

Belongs to the ATPase epsilon chain family. F-type ATPases have 2 components, CF(1) - the catalytic core - and CF(0) - the membrane proton channel. CF(1) has five subunits: alpha(3), beta(3), gamma(1), delta(1), epsilon(1). CF(0) has three main subunits: a, b and c.

The protein resides in the cell inner membrane. Functionally, produces ATP from ADP in the presence of a proton gradient across the membrane. In Nitrosomonas europaea (strain ATCC 19718 / CIP 103999 / KCTC 2705 / NBRC 14298), this protein is ATP synthase epsilon chain.